The chain runs to 353 residues: Phosphate acyltransferase (353 aa).

This sequence belongs to the PlsX family. As to quaternary structure, homodimer. Probably interacts with PlsY.

The protein localises to the cytoplasm. It catalyses the reaction a fatty acyl-[ACP] + phosphate = an acyl phosphate + holo-[ACP]. It participates in lipid metabolism; phospholipid metabolism. Catalyzes the reversible formation of acyl-phosphate (acyl-PO(4)) from acyl-[acyl-carrier-protein] (acyl-ACP). This enzyme utilizes acyl-ACP as fatty acyl donor, but not acyl-CoA. In Afipia carboxidovorans (strain ATCC 49405 / DSM 1227 / KCTC 32145 / OM5) (Oligotropha carboxidovorans), this protein is Phosphate acyltransferase.